The following is a 52-amino-acid chain: Ribosome biogenesis protein Nop10 (52 aa).

Belongs to the NOP10 family.

Its function is as follows. Involved in ribosome biogenesis; more specifically in 18S rRNA pseudouridylation and in cleavage of pre-rRNA. The sequence is that of Ribosome biogenesis protein Nop10 from Methanococcus vannielii (strain ATCC 35089 / DSM 1224 / JCM 13029 / OCM 148 / SB).